The following is a 235-amino-acid chain: Uridylate kinase (235 aa).

9 to 12 (KLSG) serves as a coordination point for ATP. Residues 17-22 (GNQGYG) are involved in allosteric activation by GTP. UMP is bound at residue glycine 51. Glycine 52 and arginine 56 together coordinate ATP. UMP contacts are provided by residues aspartate 71 and 132–139 (CGNPFFTT). Positions 159, 165, and 168 each coordinate ATP.

The protein belongs to the UMP kinase family. As to quaternary structure, homohexamer.

Its subcellular location is the cytoplasm. It catalyses the reaction UMP + ATP = UDP + ADP. It functions in the pathway pyrimidine metabolism; CTP biosynthesis via de novo pathway; UDP from UMP (UMPK route): step 1/1. Allosterically activated by GTP. Inhibited by UTP. Functionally, catalyzes the reversible phosphorylation of UMP to UDP. The sequence is that of Uridylate kinase from Synechococcus sp. (strain CC9311).